A 439-amino-acid polypeptide reads, in one-letter code: Dihydroorotate dehydrogenase (quinone), mitochondrial (439 aa).

The transit peptide at 1-22 (MMHRVGFNVIGRRSFFTVNARR) directs the protein to the mitochondrion. Residues 37 to 53 (LTALLLAGSAGYLYFMN) form a helical membrane-spanning segment. FMN contacts are provided by residues 119 to 123 (AGLDK) and Ser143. Lys123 lines the substrate pocket. Residue 168 to 172 (NRYGF) coordinates substrate. Asn215 and Asn245 together coordinate FMN. 245 to 250 (NVSSPN) contributes to the substrate binding site. Ser248 (nucleophile) is an active-site residue. 2 residues coordinate FMN: Lys296 and Ser324. Residue 325–326 (NT) coordinates substrate. FMN-binding positions include Gly350, Gly380, and 401–402 (YT).

Belongs to the dihydroorotate dehydrogenase family. Type 2 subfamily. It depends on FMN as a cofactor.

It localises to the mitochondrion inner membrane. It catalyses the reaction (S)-dihydroorotate + a quinone = orotate + a quinol. It functions in the pathway pyrimidine metabolism; UMP biosynthesis via de novo pathway; orotate from (S)-dihydroorotate (quinone route): step 1/1. In terms of biological role, catalyzes the conversion of dihydroorotate to orotate with quinone as electron acceptor. This chain is Dihydroorotate dehydrogenase (quinone), mitochondrial (URA9), found in Candida glabrata (strain ATCC 2001 / BCRC 20586 / JCM 3761 / NBRC 0622 / NRRL Y-65 / CBS 138) (Yeast).